The following is a 140-amino-acid chain: Trafficking protein particle complex subunit 2-like protein (140 aa).

The protein belongs to the TRAPP small subunits family. Sedlin subfamily.

The sequence is that of Trafficking protein particle complex subunit 2-like protein (trappc2l) from Dictyostelium discoideum (Social amoeba).